Consider the following 310-residue polypeptide: Malate dehydrogenase (310 aa).

NAD(+)-binding positions include 7–12 and aspartate 32; that span reads GAGNVG. Substrate-binding residues include arginine 81 and arginine 87. NAD(+) contacts are provided by residues asparagine 94 and 117–119; that span reads VSN. Residues asparagine 119 and arginine 150 each coordinate substrate. Histidine 174 acts as the Proton acceptor in catalysis.

Belongs to the LDH/MDH superfamily. MDH type 3 family.

The enzyme catalyses (S)-malate + NAD(+) = oxaloacetate + NADH + H(+). Catalyzes the reversible oxidation of malate to oxaloacetate. This Chlorobium phaeobacteroides (strain DSM 266 / SMG 266 / 2430) protein is Malate dehydrogenase.